The following is a 431-amino-acid chain: Inactive polypeptide N-acetylgalactosaminyltransferase-like protein 5 (431 aa).

The Cytoplasmic segment spans residues 1–4 (MKSV). A helical; Signal-anchor for type II membrane protein transmembrane segment spans residues 5 to 27 (IIQGLFCGFLAIGLWASMLLLFL). The Lumenal segment spans residues 28–431 (HLEQEDMLEN…TERKRKKNRF (404 aa)). An N-linked (GlcNAc...) asparagine glycan is attached at asparagine 68. 2 cysteine pairs are disulfide-bonded: cysteine 105–cysteine 336 and cysteine 327–cysteine 403. Positions 114 to 224 (LPTASIIICF…RVWLEPLLHA (111 aa)) are catalytic subdomain A. Positions 282-344 (PIRSPAMTGG…PCSRVGYNSK (63 aa)) are catalytic subdomain B. N-linked (GlcNAc...) asparagine glycosylation is found at asparagine 353 and asparagine 390.

The protein belongs to the glycosyltransferase 2 family. GalNAc-T subfamily. It depends on Mn(2+) as a cofactor. In terms of tissue distribution, expressed in testis. Mainly expressed in the round and elongated spermatids during spermiogenesis, not in the outermost cells of the seminiferous tubules, which contain spermatogonia and somatic Sertoli cells. Present in the juxtanuclear space in the round spermatids, not in the acrosomal vesicles. In the elongating spermatids, localizes strongly in the acroplaxome, the region between the developing acrosome and nucleus. During differentiation, also weakly detected in the transient manchette containing microtubules. In epididymal spermatozoa, weakly detected in the midpiece, but concentrates mainly in the neck region around the head-tail coupling apparatus (at protein level).

The protein resides in the late endosome membrane. Probable inactive glycosyltransferase required during spermatid development. May participate in protein loading into the acrosomes and accumulation of ubiquitin-proteasome systems around the head-tail coupling apparatus region. The sequence is that of Inactive polypeptide N-acetylgalactosaminyltransferase-like protein 5 (Galntl5) from Mus musculus (Mouse).